The sequence spans 292 residues: ATP synthase gamma chain (292 aa).

Belongs to the ATPase gamma chain family. F-type ATPases have 2 components, CF(1) - the catalytic core - and CF(0) - the membrane proton channel. CF(1) has five subunits: alpha(3), beta(3), gamma(1), delta(1), epsilon(1). CF(0) has three main subunits: a, b and c.

It localises to the cell membrane. Produces ATP from ADP in the presence of a proton gradient across the membrane. The gamma chain is believed to be important in regulating ATPase activity and the flow of protons through the CF(0) complex. The sequence is that of ATP synthase gamma chain from Streptococcus pneumoniae serotype 2 (strain D39 / NCTC 7466).